The following is a 251-amino-acid chain: Insertion sequence IS5376 putative ATP-binding protein (251 aa).

An ATP-binding site is contributed by 105–112 (GPPGIGKT).

It belongs to the IS21/IS1162 putative ATP-binding protein family.

The protein is Insertion sequence IS5376 putative ATP-binding protein of Geobacillus stearothermophilus (Bacillus stearothermophilus).